An 892-amino-acid chain; its full sequence is Translation initiation factor IF-2 (892 aa).

The tract at residues 51–296 (REHGSAPNKL…KGKRKPSTLQ (246 aa)) is disordered. The segment covering 68–82 (STLNIPSTGGKSKSV) has biased composition (polar residues). The segment covering 99 to 217 (EQAKAEEQAQ…KMAAENEGKW (119 aa)) has biased composition (basic and acidic residues). Residues 224–237 (QTESADYHVTTSQH) show a composition bias toward polar residues. Residues 239-254 (RAAEDENDAKVEGDRR) are compositionally biased toward basic and acidic residues. Basic residues predominate over residues 255 to 269 (SRTRGGKATKQKKGN). The span at 270–283 (KLSESKADREEARA) shows a compositional bias: basic and acidic residues. Positions 391-560 (HRAPVVTIMG…LLQAEVMELK (170 aa)) constitute a tr-type G domain. A G1 region spans residues 400–407 (GHVDHGKT). 400-407 (GHVDHGKT) contributes to the GTP binding site. The segment at 425-429 (GITQH) is G2. Residues 446-449 (DTPG) form a G3 region. GTP contacts are provided by residues 446–450 (DTPGH) and 500–503 (NKID). The interval 500–503 (NKID) is G4. The G5 stretch occupies residues 536–538 (SAK).

Belongs to the TRAFAC class translation factor GTPase superfamily. Classic translation factor GTPase family. IF-2 subfamily.

The protein localises to the cytoplasm. One of the essential components for the initiation of protein synthesis. Protects formylmethionyl-tRNA from spontaneous hydrolysis and promotes its binding to the 30S ribosomal subunits. Also involved in the hydrolysis of GTP during the formation of the 70S ribosomal complex. The protein is Translation initiation factor IF-2 of Yersinia enterocolitica serotype O:8 / biotype 1B (strain NCTC 13174 / 8081).